The following is a 53-amino-acid chain: Rubredoxin (53 aa).

One can recognise a Rubredoxin-like domain in the interval 1 to 53 (MTKYVCTVCGYVYDPEVGDPDNNINPGTSFQDIPEDWVCPLCGVGKDQFEEEA). 4 residues coordinate Fe cation: cysteine 6, cysteine 9, cysteine 39, and cysteine 42.

It belongs to the rubredoxin family. Requires Fe(3+) as cofactor.

Rubredoxin is a small nonheme, iron protein lacking acid-labile sulfide. Its single Fe, chelated to 4 Cys, functions as an electron acceptor and may also stabilize the conformation of the molecule. In Acetoanaerobium sticklandii (strain ATCC 12662 / DSM 519 / JCM 1433 / CCUG 9281 / NCIMB 10654 / HF) (Clostridium sticklandii), this protein is Rubredoxin.